The sequence spans 223 residues: ATP-dependent dethiobiotin synthetase BioD (223 aa).

A Mg(2+)-binding site is contributed by Thr-16. Lys-37 is a catalytic residue. Residue Ser-41 participates in substrate binding. Mg(2+)-binding residues include Asp-50 and Glu-111. Residues Asp-50, 111-114 (EGAG), 171-172 (NQ), 201-203 (AHV), and Glu-208 contribute to the ATP site.

It belongs to the dethiobiotin synthetase family. In terms of assembly, homodimer. Mg(2+) is required as a cofactor.

It is found in the cytoplasm. It catalyses the reaction (7R,8S)-7,8-diammoniononanoate + CO2 + ATP = (4R,5S)-dethiobiotin + ADP + phosphate + 3 H(+). It functions in the pathway cofactor biosynthesis; biotin biosynthesis; biotin from 7,8-diaminononanoate: step 1/2. Its function is as follows. Catalyzes a mechanistically unusual reaction, the ATP-dependent insertion of CO2 between the N7 and N8 nitrogen atoms of 7,8-diaminopelargonic acid (DAPA, also called 7,8-diammoniononanoate) to form a ureido ring. The protein is ATP-dependent dethiobiotin synthetase BioD of Anaeromyxobacter sp. (strain Fw109-5).